The primary structure comprises 201 residues: 3-isopropylmalate dehydratase small subunit (201 aa).

This sequence belongs to the LeuD family. LeuD type 1 subfamily. Heterodimer of LeuC and LeuD.

It carries out the reaction (2R,3S)-3-isopropylmalate = (2S)-2-isopropylmalate. The protein operates within amino-acid biosynthesis; L-leucine biosynthesis; L-leucine from 3-methyl-2-oxobutanoate: step 2/4. Catalyzes the isomerization between 2-isopropylmalate and 3-isopropylmalate, via the formation of 2-isopropylmaleate. In Allorhizobium ampelinum (strain ATCC BAA-846 / DSM 112012 / S4) (Agrobacterium vitis (strain S4)), this protein is 3-isopropylmalate dehydratase small subunit.